The sequence spans 1298 residues: Histone-lysine N-methyltransferase EHMT1 (1298 aa).

Disordered stretches follow at residues 1–111 (MAAA…HVTA) and 144–192 (ASSL…RKLP). A2 carries the post-translational modification N-acetylalanine. A Glycyl lysine isopeptide (Lys-Gly) (interchain with G-Cter in SUMO1); alternate cross-link involves residue K22. Residue K22 forms a Glycyl lysine isopeptide (Lys-Gly) (interchain with G-Cter in SUMO2); alternate linkage. Residues 38 to 50 (SAEKQAGEAHMAA) show a composition bias toward basic and acidic residues. 2 stretches are compositionally biased toward polar residues: residues 54-67 (TNGS…SSHA) and 76-89 (SARV…NTLT). A compositionally biased stretch (basic and acidic residues) spans 96 to 105 (VSERDSEAAK). Residues K190, K199, K231, K234, K317, and K327 each participate in a glycyl lysine isopeptide (Lys-Gly) (interchain with G-Cter in SUMO2) cross-link. Residues 211–234 (VVGLHAASKDPREVREARDHKEPK) form a disordered region. The segment covering 217 to 234 (ASKDPREVREARDHKEPK) has biased composition (basic and acidic residues). Residues 339-479 (VNGESLEMDS…QTAPGDSTGY (141 aa)) are disordered. A compositionally biased stretch (acidic residues) spans 344–360 (LEMDSDEDDSEELEEDD). Positions 373–393 (EDSRTSKESMSEADRAQKMDG) are enriched in basic and acidic residues. A compositionally biased stretch (acidic residues) spans 394–416 (ESEEEQESVDTGEEEEGGDESDL). Residue K432 forms a Glycyl lysine isopeptide (Lys-Gly) (interchain with G-Cter in SUMO2) linkage. Position 435 is a phosphoserine (S435). Positions 440-452 (PARKRRRRSRKKP) are enriched in basic residues. Polar residues predominate over residues 460–474 (SYKSSAGSAEQTAPG). S483 carries the phosphoserine modification. Residues K492, K559, K644, K659, K684, and K731 each participate in a glycyl lysine isopeptide (Lys-Gly) (interchain with G-Cter in SUMO2) cross-link. A disordered region spans residues 644-717 (KADTTSTVTP…TPGLSQGPGK (74 aa)). ANK repeat units follow at residues 737 to 766 (FHPK…DPNF), 772 to 801 (NKRS…NIDT), 805 to 834 (DQRT…LVDP), 838 to 868 (EGST…DVNC), 872 to 901 (GGWT…DINI), 905 to 934 (EENI…DLHA), 938 to 967 (HGDS…DVTL), and 971 to 1004 (EGET…DRPS). Positions 905 to 907 (EEN) are histone H3K9me binding. A phosphoserine mark is found at S1004 and S1048. Residues 1060-1123 (QYCVCIDDCS…NCRNRVVQNG (64 aa)) form the Pre-SET domain. Residues C1062, C1064, C1068, C1073, C1075, C1105, C1109, C1111, and C1115 each coordinate Zn(2+). The 118-residue stretch at 1126–1243 (ARLQLYRTRD…AGEQLGFDYG (118 aa)) folds into the SET domain. S-adenosyl-L-methionine-binding positions include 1136 to 1138 (MGW), Y1173, and 1200 to 1201 (NH). The tract at residues 1162–1181 (DSEADVREEDSYLFDLDNKD) is interaction with histone H3. Residue C1203 participates in Zn(2+) binding. The interaction with histone H3 stretch occupies residues 1242–1245 (YGER). C1256 contributes to the Zn(2+) binding site. Residue R1257 participates in S-adenosyl-L-methionine binding. Zn(2+) contacts are provided by C1258 and C1263. The segment at 1274-1298 (QASAAQEAQEDGLPDTSSAAAADPL) is disordered.

Belongs to the class V-like SAM-binding methyltransferase superfamily. Heterodimer; heterodimerizes with EHMT2. Interacts with WIZ and EHMT2. Part of the E2F6.com-1 complex in G0 phase composed of E2F6, MGA, MAX, TFDP1, CBX3, BAT8, EHMT1, RING1, RNF2, MBLR, L3MBTL2 and YAF2. Interacts (via ANK repeats) with RELA (when monomethylated at 'Lys-310'). Interacts with MPHOSPH8. Interacts with CDYL. Interacts with REST only in the presence of CDYL. Part of a complex containing at least CDYL, REST, WIZ, SETB1, EHMT1 and EHMT2. Interacts with BAZ2B. Widely expressed.

It localises to the nucleus. The protein localises to the chromosome. The enzyme catalyses N(6)-methyl-L-lysyl(9)-[histone H3] + S-adenosyl-L-methionine = N(6),N(6)-dimethyl-L-lysyl(9)-[histone H3] + S-adenosyl-L-homocysteine + H(+). It carries out the reaction L-lysyl(9)-[histone H3] + S-adenosyl-L-methionine = N(6)-methyl-L-lysyl(9)-[histone H3] + S-adenosyl-L-homocysteine + H(+). Methyltransferase activity is inhibited by BIX-01294. Efficiently inhibited by compound E72, a BIX-01294 derivative in which the diazepane ring and the benzyl are replaced with a 3-dimethylaminopropyl and a 5-aminopentyl group at sites B and C, respectively. Functionally, histone methyltransferase that specifically mono- and dimethylates 'Lys-9' of histone H3 (H3K9me1 and H3K9me2, respectively) in euchromatin. H3K9me represents a specific tag for epigenetic transcriptional repression by recruiting HP1 proteins to methylated histones. Also weakly methylates 'Lys-27' of histone H3 (H3K27me). Also required for DNA methylation, the histone methyltransferase activity is not required for DNA methylation, suggesting that these 2 activities function independently. Probably targeted to histone H3 by different DNA-binding proteins like E2F6, MGA, MAX and/or DP1. During G0 phase, it probably contributes to silencing of MYC- and E2F-responsive genes, suggesting a role in G0/G1 transition in cell cycle. In addition to the histone methyltransferase activity, also methylates non-histone proteins: mediates dimethylation of 'Lys-373' of p53/TP53. Represses the expression of mitochondrial function-related genes, perhaps by occupying their promoter regions, working in concert with probable chromatin reader BAZ2B. The sequence is that of Histone-lysine N-methyltransferase EHMT1 (EHMT1) from Homo sapiens (Human).